Consider the following 182-residue polypeptide: Urease accessory protein UreE (182 aa).

Residues P128–A182 are disordered. Basic and acidic residues predominate over residues L146–H162. Acidic residues predominate over residues E173–A182.

The protein belongs to the UreE family.

It is found in the cytoplasm. Its function is as follows. Involved in urease metallocenter assembly. Binds nickel. Probably functions as a nickel donor during metallocenter assembly. The sequence is that of Urease accessory protein UreE from Cereibacter sphaeroides (strain ATCC 17023 / DSM 158 / JCM 6121 / CCUG 31486 / LMG 2827 / NBRC 12203 / NCIMB 8253 / ATH 2.4.1.) (Rhodobacter sphaeroides).